A 168-amino-acid polypeptide reads, in one-letter code: Ribonuclease H (168 aa).

One can recognise an RNase H type-1 domain in the interval 10–151; the sequence is NNIPVKIYTD…ADKLATNGKI (142 aa). Mg(2+) is bound by residues Asp-19, Glu-57, Asp-79, and Asp-143.

The protein belongs to the RNase H family. In terms of assembly, monomer. Requires Mg(2+) as cofactor.

It is found in the cytoplasm. It carries out the reaction Endonucleolytic cleavage to 5'-phosphomonoester.. In terms of biological role, endonuclease that specifically degrades the RNA of RNA-DNA hybrids. The protein is Ribonuclease H of Orientia tsutsugamushi (strain Boryong) (Rickettsia tsutsugamushi).